A 651-amino-acid polypeptide reads, in one-letter code: Far upstream element-binding protein 1 (651 aa).

2 disordered regions span residues 1–24 (MADY…GVVN) and 40–92 (KIGG…HQQQ). Alanine 2 is modified (N-acetylalanine). Phosphoserine is present on residues serine 48 and serine 51. The span at 61–73 (RPLEDGDQPDAKK) shows a compositional bias: basic and acidic residues. KH domains are found at residues 96-160 (VMTE…KRLL), 181-247 (NAVQ…KEMV), and 271-335 (NEGI…AEII). Serine 136 is modified (phosphoserine). Threonine 149 bears the Phosphothreonine mark. Arginine 317, arginine 355, arginine 357, and arginine 359 each carry omega-N-methylarginine. A KH 4 domain is found at 372 to 439 (LQEFNFIVPT…QQIDYARQLI (68 aa)). Position 411 is a phosphoserine (serine 411). Threonine 428 bears the Phosphothreonine mark. Disordered regions lie at residues 443–528 (IGGP…GADP), 545–574 (AQPP…APAG), and 625–651 (TSPQ…HHLY). The span at 464-501 (PHGPPGPPGPGTPMGPYNPAPYNPGPPGPAPHGPPAPY) shows a compositional bias: pro residues. Composition is skewed to low complexity over residues 514-528 (QQQA…GADP) and 552-574 (PAGA…APAG). Position 626 is a phosphoserine (serine 626).

As to quaternary structure, found in a complex with PUF60 and far upstream element (FUSE) DNA segment. Interacts with PUF60 and JTV1. In terms of processing, ubiquitinated. This targets the protein for proteasome-mediated degradation.

The protein localises to the nucleus. Its function is as follows. Regulates MYC expression by binding to a single-stranded far-upstream element (FUSE) upstream of the MYC promoter. May act both as activator and repressor of transcription. The sequence is that of Far upstream element-binding protein 1 (Fubp1) from Mus musculus (Mouse).